Consider the following 1063-residue polypeptide: DNA-directed RNA polymerase subunit beta (1063 aa).

It belongs to the RNA polymerase beta chain family. In plastids the minimal PEP RNA polymerase catalytic core is composed of four subunits: alpha, beta, beta', and beta''. When a (nuclear-encoded) sigma factor is associated with the core the holoenzyme is formed, which can initiate transcription.

The protein resides in the plastid. It is found in the chloroplast. It carries out the reaction RNA(n) + a ribonucleoside 5'-triphosphate = RNA(n+1) + diphosphate. In terms of biological role, DNA-dependent RNA polymerase catalyzes the transcription of DNA into RNA using the four ribonucleoside triphosphates as substrates. This chain is DNA-directed RNA polymerase subunit beta, found in Zygnema circumcarinatum (Green alga).